The sequence spans 329 residues: NADH-quinone oxidoreductase subunit H (329 aa).

8 helical membrane-spanning segments follow: residues 11–31 (IVVA…CGAL), 81–101 (LIFT…FAVV), 114–134 (IGLL…LFAG), 154–174 (ISYE…TGSF), 187–207 (TWFI…GVAV), 238–258 (FFVG…TLFF), 270–290 (QLSF…FILL), and 309–329 (FCLP…LAAQ).

It belongs to the complex I subunit 1 family. In terms of assembly, NDH-1 is composed of 13 different subunits. Subunits NuoA, H, J, K, L, M, N constitute the membrane sector of the complex.

Its subcellular location is the cell inner membrane. The enzyme catalyses a quinone + NADH + 5 H(+)(in) = a quinol + NAD(+) + 4 H(+)(out). Its function is as follows. NDH-1 shuttles electrons from NADH, via FMN and iron-sulfur (Fe-S) centers, to quinones in the respiratory chain. The immediate electron acceptor for the enzyme in this species is believed to be ubiquinone. Couples the redox reaction to proton translocation (for every two electrons transferred, four hydrogen ions are translocated across the cytoplasmic membrane), and thus conserves the redox energy in a proton gradient. This subunit may bind ubiquinone. The sequence is that of NADH-quinone oxidoreductase subunit H from Azotobacter vinelandii (strain DJ / ATCC BAA-1303).